The following is a 394-amino-acid chain: RAB6A-GEF complex partner protein 2 (394 aa).

The protein belongs to the RGP1 family. In terms of assembly, forms a complex with RIC1; the interaction enhances RAB6A GTPase activity. Interacts with RIC1. Interacts with RAB6A; the interaction is direct with a preference for RAB6A-GDP. Interacts with RAB33B.

The protein resides in the cytoplasm. It is found in the cytosol. Its subcellular location is the membrane. The RIC1-RGP1 complex acts as a guanine nucleotide exchange factor (GEF), which activates RAB6A by exchanging bound GDP for free GTP and may thereby required for efficient fusion of endosome-derived vesicles with the Golgi compartment. The RIC1-RGP1 complex participates in the recycling of mannose-6-phosphate receptors. This Bos taurus (Bovine) protein is RAB6A-GEF complex partner protein 2.